We begin with the raw amino-acid sequence, 398 residues long: Acetate kinase (398 aa).

Asn-8 contributes to the Mg(2+) binding site. Position 15 (Lys-15) interacts with ATP. Arg-89 is a substrate binding site. Asp-146 acts as the Proton donor/acceptor in catalysis. ATP contacts are provided by residues 206–210, 283–285, and 331–335; these read HIGNG, DMR, and GMGEN. Residue Glu-383 coordinates Mg(2+).

Belongs to the acetokinase family. As to quaternary structure, homodimer. Mg(2+) serves as cofactor. Requires Mn(2+) as cofactor.

The protein localises to the cytoplasm. The catalysed reaction is acetate + ATP = acetyl phosphate + ADP. It participates in metabolic intermediate biosynthesis; acetyl-CoA biosynthesis; acetyl-CoA from acetate: step 1/2. In terms of biological role, catalyzes the formation of acetyl phosphate from acetate and ATP. Can also catalyze the reverse reaction. The protein is Acetate kinase of Streptococcus pyogenes serotype M5 (strain Manfredo).